Reading from the N-terminus, the 204-residue chain is Shikimate kinase (204 aa).

ATP is bound at residue 35 to 40; it reads ASGKST. Ser-39 is a Mg(2+) binding site. Residues Asp-57, Arg-81, and Gly-103 each coordinate substrate. Arg-142 is a binding site for ATP. Arg-169 serves as a coordination point for substrate.

It belongs to the shikimate kinase family. As to quaternary structure, monomer. The cofactor is Mg(2+).

It is found in the cytoplasm. The enzyme catalyses shikimate + ATP = 3-phosphoshikimate + ADP + H(+). It participates in metabolic intermediate biosynthesis; chorismate biosynthesis; chorismate from D-erythrose 4-phosphate and phosphoenolpyruvate: step 5/7. In terms of biological role, catalyzes the specific phosphorylation of the 3-hydroxyl group of shikimic acid using ATP as a cosubstrate. The sequence is that of Shikimate kinase from Salinibacter ruber (strain DSM 13855 / M31).